Reading from the N-terminus, the 65-residue chain is UPF0434 protein VFMJ11_A0475 (65 aa).

The protein belongs to the UPF0434 family.

This Aliivibrio fischeri (strain MJ11) (Vibrio fischeri) protein is UPF0434 protein VFMJ11_A0475.